The following is a 757-amino-acid chain: MADSSCSLPPLYENISYKSYILRAVDLTILGLLFSLLLHRILYMSQNGIIWLVAFLCESCFSFVWLLSTCTKWSPAETKPYPDRLDERVYDLPSVDMFVPTADPVREPPIMVVNTVLSLLAVNYPANKLACYVSDDGCSPLTYFSLKEASKFAKIWVPFCKKYNLKVRAPFRYFLNPFAATEGSEFSRDWEMTKREYEKLCRKVEDATGDSHLLGTDNELEAFSNTKPNDHSTIIKVVWENKGGVGDEKEVPHIVYISREKRPNYLHHYKAGAMNFLARVSGLMTNAPYMLNVDCDMYANEADVVRQAMCIFLQKSQNQNHCAFVQFPQEFYDSNTIKLTVIKSYMGRGIAGIQGPINVGSGCFHSRRVMYGLSPDELEDNGSLSSVATRELLAEDSLSSGFGNSKEMVTSVVEALQRKPNPQNILTNSIEAAQEVGHCDYESQTSWGKTIGWLYDSMSEDMNTSIGIHSRGWTSSYIAPDPPAFLGSMPPGGLEAMIQQRRWATGSIEVLFNKQSPLLGLFCRKLRFRQRVAYLCVSICVRSIPELIYCLLPAYCLLHNSALFPKGLCLGITMLLAGMHCLYTLWEFMCLGHSIQSWYVSQSFWRIVATSSWLFSIFDIILKLLGLSKNVFLVSKKTMPVETMSGSGIGPSQREDDGPNSGKTEFDGSLYFLPGTFIVLVNLAALVGVFVGLQRSSYSHGGGGSGLGEACACILVVMLFFPFLKGLFAKGKYGIPLSTLSKAGFLAVSFVVFSVGN.

A run of 2 helical transmembrane segments spans residues 24-44 (AVDL…ILYM) and 48-68 (GIIW…WLLS). Active-site residues include Asp136 and Asp461. 6 helical membrane-spanning segments follow: residues 533–555 (AYLC…LPAY), 568–588 (LCLG…LWEF), 607–627 (IVAT…LLGL), 672–692 (FLPG…VFVG), 704–724 (GSGL…FPFL), and 735–755 (IPLS…VFSV).

Belongs to the glycosyltransferase 2 family. Plant cellulose synthase-like B subfamily. As to expression, expressed in young seedlings, primarily in the root vascular tissue.

The protein localises to the golgi apparatus membrane. In terms of biological role, thought to be a Golgi-localized beta-glycan synthase that polymerize the backbones of noncellulosic polysaccharides (hemicelluloses) of plant cell wall. This chain is Cellulose synthase-like protein B2 (CSLB2), found in Arabidopsis thaliana (Mouse-ear cress).